We begin with the raw amino-acid sequence, 655 residues long: p-hydroxybenzoic acid efflux pump subunit AaeB (655 aa).

A run of 10 helical transmembrane segments spans residues 13-33 (FAVK…HFQL), 38-58 (WAVL…GGEP), 69-89 (LRII…IAMI), 93-113 (LLMI…SSLV), 121-141 (WGLA…EPLL), 152-172 (EIVV…PRSI), 370-390 (LFWL…IAVV), 407-427 (FIYG…VIIP), 431-451 (QSML…GIEV), and 481-501 (LFLD…TVIL).

This sequence belongs to the aromatic acid exporter ArAE (TC 2.A.85) family.

It localises to the cell inner membrane. Functionally, forms an efflux pump with AaeA. Could function as a metabolic relief valve, allowing to eliminate certain compounds when they accumulate to high levels in the cell. The protein is p-hydroxybenzoic acid efflux pump subunit AaeB of Escherichia fergusonii (strain ATCC 35469 / DSM 13698 / CCUG 18766 / IAM 14443 / JCM 21226 / LMG 7866 / NBRC 102419 / NCTC 12128 / CDC 0568-73).